A 272-amino-acid polypeptide reads, in one-letter code: Aquaporin FA-CHIP (272 aa).

The Cytoplasmic segment spans residues M1 to E17. The helical transmembrane segment at F18 to F35 threads the bilayer. The Extracellular segment spans residues N36 to D52. N-linked (GlcNAc...) asparagine glycosylation occurs at N44. The chain crosses the membrane as a helical span at residues I53–V71. The Cytoplasmic segment spans residues G72–K97. The short motif at N80 to A82 is the NPA 1 element. A helical membrane pass occupies residues A98–I119. Residues T120–A139 lie on the Extracellular side of the membrane. The N-linked (GlcNAc...) asparagine glycan is linked to N125. Residues G140–V160 traverse the membrane as a helical segment. Residues T161–V168 are Cytoplasmic-facing. Residues S169–I188 traverse the membrane as a helical segment. Over D189–W214 the chain is Extracellular. An NPA 2 motif is present at residues N196–A198. N209 is a glycosylation site (N-linked (GlcNAc...) asparagine). A helical transmembrane segment spans residues I215–A236. At P237–K272 the chain is on the cytoplasmic side.

This sequence belongs to the MIP/aquaporin (TC 1.A.8) family.

Its subcellular location is the membrane. In terms of biological role, forms a water-specific channel. The protein is Aquaporin FA-CHIP (AQPA) of Pelophylax lessonae (Pool frog).